Consider the following 399-residue polypeptide: Lipase member K (399 aa).

The first 19 residues, 1–19 (MWQLLAAACWMLLLGSMYG), serve as a signal peptide directing secretion. An AB hydrolase-1 domain is found at 78–378 (PAVYLQHGLI…HYNHVDFYLG (301 aa)). Serine 172 serves as the catalytic Nucleophile. A disulfide bridge connects residues cysteine 246 and cysteine 255. Asparagine 271 and asparagine 327 each carry an N-linked (GlcNAc...) asparagine glycan. Residues aspartate 343 and histidine 372 each act as charge relay system in the active site.

The protein belongs to the AB hydrolase superfamily. Lipase family. In terms of tissue distribution, exclusively expressed in the epidermis within the granular keratinocytes.

The protein resides in the secreted. Its function is as follows. Plays a highly specific role in the last step of keratinocyte differentiation. May have an essential function in lipid metabolism of the most differentiated epidermal layers. This chain is Lipase member K (LIPK), found in Homo sapiens (Human).